A 385-amino-acid chain; its full sequence is Exopolygalacturonase rpg16 (385 aa).

Residues 1–26 form the signal peptide; sequence MVRFTSFTSPFSAILLLSFGINKVAT. N-linked (GlcNAc...) asparagine glycans are attached at residues Asn-143, Asn-161, Asn-164, and Asn-180. Residues 165–195 form a PbH1 1 repeat; sequence STNLLLHDFIIHTVSNNSNPAKNTDALDLYH. Asp-210 functions as the Proton donor in the catalytic mechanism. Cys-212 and Cys-229 are joined by a disulfide. N-linked (GlcNAc...) asparagine glycans are attached at residues Asn-218 and Asn-226. PbH1 repeat units follow at residues 219–241, 249–270, and 278–299; these read VTKV…GSLG, VTQV…RVKT, and VEDI…IITT. Residue His-233 is part of the active site. Residues Asn-256, Asn-282, and Asn-343 are each glycosylated (N-linked (GlcNAc...) asparagine). Residues Cys-344 and Cys-350 are joined by a disulfide bond. The stretch at 350-376 is one PbH1 5 repeat; it reads CSDVTLTNINISKASNNTKNVCVNLKG. 2 N-linked (GlcNAc...) asparagine glycosylation sites follow: Asn-359 and Asn-365.

Belongs to the glycosyl hydrolase 28 family. Post-translationally, N-glycosylated.

The protein resides in the secreted. The catalysed reaction is [(1-&gt;4)-alpha-D-galacturonosyl](n) + H2O = alpha-D-galacturonate + [(1-&gt;4)-alpha-D-galacturonosyl](n-1). Functionally, specific in hydrolyzing the terminal glycosidic bond of polygalacturonic acid and oligogalacturonates. In Rhizopus delemar (strain RA 99-880 / ATCC MYA-4621 / FGSC 9543 / NRRL 43880) (Mucormycosis agent), this protein is Exopolygalacturonase rpg16.